Consider the following 258-residue polypeptide: Imidazole glycerol phosphate synthase subunit HisF (258 aa).

Active-site residues include Asp11 and Asp130.

This sequence belongs to the HisA/HisF family. As to quaternary structure, heterodimer of HisH and HisF.

Its subcellular location is the cytoplasm. The enzyme catalyses 5-[(5-phospho-1-deoxy-D-ribulos-1-ylimino)methylamino]-1-(5-phospho-beta-D-ribosyl)imidazole-4-carboxamide + L-glutamine = D-erythro-1-(imidazol-4-yl)glycerol 3-phosphate + 5-amino-1-(5-phospho-beta-D-ribosyl)imidazole-4-carboxamide + L-glutamate + H(+). The protein operates within amino-acid biosynthesis; L-histidine biosynthesis; L-histidine from 5-phospho-alpha-D-ribose 1-diphosphate: step 5/9. In terms of biological role, IGPS catalyzes the conversion of PRFAR and glutamine to IGP, AICAR and glutamate. The HisF subunit catalyzes the cyclization activity that produces IGP and AICAR from PRFAR using the ammonia provided by the HisH subunit. The protein is Imidazole glycerol phosphate synthase subunit HisF of Escherichia coli O127:H6 (strain E2348/69 / EPEC).